The primary structure comprises 93 residues: Small ribosomal subunit protein uS19 (93 aa).

It belongs to the universal ribosomal protein uS19 family.

Protein S19 forms a complex with S13 that binds strongly to the 16S ribosomal RNA. This Agathobacter rectalis (strain ATCC 33656 / DSM 3377 / JCM 17463 / KCTC 5835 / VPI 0990) (Eubacterium rectale) protein is Small ribosomal subunit protein uS19.